Consider the following 706-residue polypeptide: Elongation factor G (706 aa).

Positions 8–297 (SYVRNIGIGA…AVVDYLPSPN (290 aa)) constitute a tr-type G domain. GTP is bound by residues 17-24 (AHIDAGKT), 95-99 (DTPGH), and 149-152 (NKMD).

This sequence belongs to the TRAFAC class translation factor GTPase superfamily. Classic translation factor GTPase family. EF-G/EF-2 subfamily.

It localises to the cytoplasm. Its function is as follows. Catalyzes the GTP-dependent ribosomal translocation step during translation elongation. During this step, the ribosome changes from the pre-translocational (PRE) to the post-translocational (POST) state as the newly formed A-site-bound peptidyl-tRNA and P-site-bound deacylated tRNA move to the P and E sites, respectively. Catalyzes the coordinated movement of the two tRNA molecules, the mRNA and conformational changes in the ribosome. The protein is Elongation factor G of Orientia tsutsugamushi (strain Ikeda) (Rickettsia tsutsugamushi).